Here is a 324-residue protein sequence, read N- to C-terminus: Mating-type protein A-3 (324 aa).

A DNA-binding region (HMG box) is located at residues Thr147–Tyr215.

It localises to the nucleus. Its function is as follows. Required, together with mating-type protein A-2, for efficient ascospore formation. This chain is Mating-type protein A-3 (mtA-3), found in Neurospora crassa (strain ATCC 24698 / 74-OR23-1A / CBS 708.71 / DSM 1257 / FGSC 987).